Here is a 72-residue protein sequence, read N- to C-terminus: Translation initiation factor IF-1 (72 aa).

The 72-residue stretch at 1-72 (MSKDDSIEFE…TKGRITYRMK (72 aa)) folds into the S1-like domain.

Belongs to the IF-1 family. As to quaternary structure, component of the 30S ribosomal translation pre-initiation complex which assembles on the 30S ribosome in the order IF-2 and IF-3, IF-1 and N-formylmethionyl-tRNA(fMet); mRNA recruitment can occur at any time during PIC assembly.

It is found in the cytoplasm. Functionally, one of the essential components for the initiation of protein synthesis. Stabilizes the binding of IF-2 and IF-3 on the 30S subunit to which N-formylmethionyl-tRNA(fMet) subsequently binds. Helps modulate mRNA selection, yielding the 30S pre-initiation complex (PIC). Upon addition of the 50S ribosomal subunit IF-1, IF-2 and IF-3 are released leaving the mature 70S translation initiation complex. The sequence is that of Translation initiation factor IF-1 from Xanthomonas campestris pv. campestris (strain 8004).